We begin with the raw amino-acid sequence, 200 residues long: Glycerol-3-phosphate acyltransferase (200 aa).

5 helical membrane-spanning segments follow: residues 2–22 (FNIS…AVIV), 51–71 (KAAA…VLLA), 84–104 (AIAA…FFGF), 114–134 (LGVL…IWLV), and 159–179 (FFMP…LVLF).

Belongs to the PlsY family. In terms of assembly, probably interacts with PlsX.

It localises to the cell inner membrane. It catalyses the reaction an acyl phosphate + sn-glycerol 3-phosphate = a 1-acyl-sn-glycero-3-phosphate + phosphate. It participates in lipid metabolism; phospholipid metabolism. Functionally, catalyzes the transfer of an acyl group from acyl-phosphate (acyl-PO(4)) to glycerol-3-phosphate (G3P) to form lysophosphatidic acid (LPA). This enzyme utilizes acyl-phosphate as fatty acyl donor, but not acyl-CoA or acyl-ACP. In Neisseria meningitidis serogroup C (strain 053442), this protein is Glycerol-3-phosphate acyltransferase.